Here is a 150-residue protein sequence, read N- to C-terminus: D-aminoacyl-tRNA deacylase (150 aa).

Residues 138 to 139 carry the Gly-cisPro motif, important for rejection of L-amino acids motif; it reads GP.

This sequence belongs to the DTD family. In terms of assembly, homodimer.

Its subcellular location is the cytoplasm. The catalysed reaction is glycyl-tRNA(Ala) + H2O = tRNA(Ala) + glycine + H(+). It carries out the reaction a D-aminoacyl-tRNA + H2O = a tRNA + a D-alpha-amino acid + H(+). Functionally, an aminoacyl-tRNA editing enzyme that deacylates mischarged D-aminoacyl-tRNAs. Also deacylates mischarged glycyl-tRNA(Ala), protecting cells against glycine mischarging by AlaRS. Acts via tRNA-based rather than protein-based catalysis; rejects L-amino acids rather than detecting D-amino acids in the active site. By recycling D-aminoacyl-tRNA to D-amino acids and free tRNA molecules, this enzyme counteracts the toxicity associated with the formation of D-aminoacyl-tRNA entities in vivo and helps enforce protein L-homochirality. The chain is D-aminoacyl-tRNA deacylase from Flavobacterium psychrophilum (strain ATCC 49511 / DSM 21280 / CIP 103535 / JIP02/86).